The sequence spans 571 residues: MAYEISRQQYGELYGPTTGDGIRLADTDLVLRIEKDLTAKGDEVGFGGGKVIREGMGMNARMTRDEGVVDTVITNAIIVDHTGIYKADIGIRDGLIEGIGRAGNPDVQDDIDIPVGVNTEAYAGEHTIVTAGAIDTHIHFISPDQFDTALSNGTTTFIGGGTGPADGTKATTITPGEWHIHRMIEATSDAPVNIGLLGKGHAAVPGPLKAQIRAGAIGLKIHEDWGATRSAIDTSLRVADELDVQIAIHTDTLNEYGYLEDTIKAIDHRTIHTFHTEGAGGGHAPDIIAIAGEKNVIPASTNPTLPFTKNTVDEHLDMLMVCHHLNKDIPEDVAFADSRIRGETIGVEDVLHDLGVFSITSSDSQAMGRVGEVVLRTWQVAHINKQQRGPLEGDSEGNDNNRIKRYVSKYTINPAIAHGISHLVGSVEVGKMADLVLWEPRFFGIKPKVVLKSGQAAYSEMGDSNGSIPTPQPVTYRRNWGATGAASETAAVTFVPSVALQSGVEDKLRGGRALLEARDMREITKKDLKHNAATPKIEVDPQTYQVRLDGELVEGSKPTETLPMGQKYFLF.

Residues 132-571 (GAIDTHIHFI…LPMGQKYFLF (440 aa)) enclose the Urease domain. The Ni(2+) site is built by His-137, His-139, and Lys-220. Lys-220 carries the post-translational modification N6-carboxylysine. His-222 contacts substrate. Residues His-249 and His-275 each coordinate Ni(2+). His-323 acts as the Proton donor in catalysis. Asp-363 contacts Ni(2+).

The protein belongs to the metallo-dependent hydrolases superfamily. Urease alpha subunit family. In terms of assembly, heterotrimer of UreA (gamma), UreB (beta) and UreC (alpha) subunits. Three heterotrimers associate to form the active enzyme. Requires Ni cation as cofactor. Post-translationally, carboxylation allows a single lysine to coordinate two nickel ions.

Its subcellular location is the cytoplasm. It catalyses the reaction urea + 2 H2O + H(+) = hydrogencarbonate + 2 NH4(+). Its pathway is nitrogen metabolism; urea degradation; CO(2) and NH(3) from urea (urease route): step 1/1. This chain is Urease subunit alpha, found in Corynebacterium urealyticum (strain ATCC 43042 / DSM 7109).